We begin with the raw amino-acid sequence, 181 residues long: Oligoribonuclease (181 aa).

In terms of domain architecture, Exonuclease spans 8-171 (LIWIDMEMTG…ADIYDSIEEL (164 aa)). Tyr129 is an active-site residue.

It belongs to the oligoribonuclease family.

The protein resides in the cytoplasm. Functionally, 3'-to-5' exoribonuclease specific for small oligoribonucleotides. This Nitrosomonas eutropha (strain DSM 101675 / C91 / Nm57) protein is Oligoribonuclease.